We begin with the raw amino-acid sequence, 320 residues long: Ubiquitin-like domain-containing CTD phosphatase 1 (320 aa).

A Ubiquitin-like domain is found at 6–77 (VVVIVKWSGK…LKPNFKLMMV (72 aa)). The FCP1 homology domain occupies 136–296 (PREGKKLLVL…LKLSDYLRKI (161 aa)). Mg(2+)-binding residues include D146, D148, and D255.

It depends on Mg(2+) as a cofactor.

It localises to the nucleus. It carries out the reaction O-phospho-L-seryl-[protein] + H2O = L-seryl-[protein] + phosphate. The catalysed reaction is O-phospho-L-threonyl-[protein] + H2O = L-threonyl-[protein] + phosphate. Its function is as follows. Dephosphorylates 26S nuclear proteasomes, thereby decreasing their proteolytic activity. Recruited to the 19S regulatory particle of the 26S proteasome where it dephosphorylates 19S component Rpt1 which impairs Rpt1 ATPase activity and disrupts 26S proteasome assembly. This is Ubiquitin-like domain-containing CTD phosphatase 1 from Drosophila melanogaster (Fruit fly).